We begin with the raw amino-acid sequence, 708 residues long: Nicastrin (708 aa).

The N-terminal stretch at 1-27 (MATTRGGSGPDPGSRGLLLLSFSVVLA) is a signal peptide. Over 28–668 (GLCGGNSVER…IFLIASKELE (641 aa)) the chain is Lumenal. N-linked (GlcNAc...) asparagine glycans are attached at residues N44, N54, and N128. C49 and C61 are disulfide-bonded. C139 and C158 form a disulfide bridge. N186 and N203 each carry an N-linked (GlcNAc...) asparagine glycan. Disulfide bonds link C194/C212 and C229/C247. N-linked (GlcNAc...) asparagine glycosylation is found at N263, N386, N434, N463, N505, N529, N561, N572, N579, N593, and N611. A disulfide bond links C585 and C619. A helical membrane pass occupies residues 669 to 689 (FITLIVGFSTLVFSLIVTYCI). Residues 690 to 708 (NAKADVLFVAPREPGAVSY) are Cytoplasmic-facing.

Belongs to the nicastrin family. Component of the gamma-secretase complex. The functional gamma-secretase complex is composed of at least four polypeptides: a presenilin homodimer (PSEN1 or PSEN2), nicastrin (NCSTN), APH1 (APH1A or APH1B) and PEN2. Binds to proteolytic processed C-terminal fragments C83 and C99 of the amyloid precursor protein (APP). Interacts with PSEN1 and PSEN2. In terms of processing, N-glycosylated.

It localises to the membrane. It is found in the cytoplasmic vesicle membrane. The protein resides in the melanosome. Functionally, essential subunit of the gamma-secretase complex, an endoprotease complex that catalyzes the intramembrane cleavage of integral membrane proteins such as Notch receptors and APP (amyloid-beta precursor protein). The gamma-secretase complex plays a role in Notch and Wnt signaling cascades and regulation of downstream processes via its role in processing key regulatory proteins, and by regulating cytosolic CTNNB1 levels. The sequence is that of Nicastrin (Ncstn) from Mus musculus (Mouse).